The sequence spans 355 residues: Peptide chain release factor 1 (355 aa).

Residue Gln-231 is modified to N5-methylglutamine.

It belongs to the prokaryotic/mitochondrial release factor family. Post-translationally, methylated by PrmC. Methylation increases the termination efficiency of RF1.

Its subcellular location is the cytoplasm. Functionally, peptide chain release factor 1 directs the termination of translation in response to the peptide chain termination codons UAG and UAA. The sequence is that of Peptide chain release factor 1 from Aliarcobacter butzleri (strain RM4018) (Arcobacter butzleri).